The following is a 737-amino-acid chain: Catalase-peroxidase (737 aa).

The segment at residues 89–219 (WHSAGTYRVF…LAASHMGLIY (131 aa)) is a cross-link (tryptophyl-tyrosyl-methioninium (Trp-Tyr) (with M-245)). The Proton acceptor role is filled by His-90. Positions 219–245 (YVNPEGPNGNPDPKAAARDIRVTFGRM) form a cross-link, tryptophyl-tyrosyl-methioninium (Tyr-Met) (with W-89). His-260 serves as a coordination point for heme b.

Belongs to the peroxidase family. Peroxidase/catalase subfamily. Homodimer or homotetramer. Heme b is required as a cofactor. Formation of the three residue Trp-Tyr-Met cross-link is important for the catalase, but not the peroxidase activity of the enzyme.

The protein resides in the cytoplasm. It carries out the reaction H2O2 + AH2 = A + 2 H2O. The enzyme catalyses 2 H2O2 = O2 + 2 H2O. Its function is as follows. Bifunctional enzyme with both catalase and broad-spectrum peroxidase activity. The sequence is that of Catalase-peroxidase from Aspergillus terreus (strain NIH 2624 / FGSC A1156).